A 609-amino-acid chain; its full sequence is NADH-ubiquinone oxidoreductase chain 5 (609 aa).

15 consecutive transmembrane segments (helical) span residues 6-26 (SSILMILILLTTPIIISMTNL), 35-55 (YATSSIKFSFLLSLLPLLLFF), 84-104 (YFSILFLSVALFVTWSIMQFS), 116-138 (RFIKYLMMFLITMLILTSANNLF), 140-160 (LFIGWEGVGIMSFLLIGWWYG), 171-191 (AILYNRVGDIGFILAMTWFCL), 240-260 (TPVSALLHSSTMVVAGIFLMI), 272-292 (IMTAMLCLGAITTLFTAICAL), 300-319 (IVAFSTSSQLGLMMVTLGIN), 330-350 (THAFFKAMLFMCSGSIIHSLN), 365-385 (MPFTSSCLIIGSLALTGMPFL), 409-429 (MITLIATSMTAVYSMRIIYFV), 456-476 (LALGSILAGFLISLNIPPTNI), 481-501 (MPWHLKMTALLITILGFAIAL), and 581-601 (GLIKLYFLSFLITISLIFILH).

Belongs to the complex I subunit 5 family. As to quaternary structure, core subunit of respiratory chain NADH dehydrogenase (Complex I) which is composed of 45 different subunits.

The protein resides in the mitochondrion inner membrane. The enzyme catalyses a ubiquinone + NADH + 5 H(+)(in) = a ubiquinol + NAD(+) + 4 H(+)(out). Its function is as follows. Core subunit of the mitochondrial membrane respiratory chain NADH dehydrogenase (Complex I) which catalyzes electron transfer from NADH through the respiratory chain, using ubiquinone as an electron acceptor. Essential for the catalytic activity and assembly of complex I. The sequence is that of NADH-ubiquinone oxidoreductase chain 5 from Rattus norvegicus (Rat).